Here is a 54-residue protein sequence, read N- to C-terminus: Hemolytic toxin (54 aa).

Positions 3–12 (ALAGTIIAGA) are plays an important role in the hemolytic activity. The segment at 11-30 (GASLGFQILDKVLGELGKVS) is N-terminal region.

This sequence belongs to the actinoporin family. Sea anemone subfamily. In terms of assembly, octamer or nonamer in membranes. Monomer in the soluble state.

The protein resides in the secreted. It localises to the nematocyst. The protein localises to the target cell membrane. In terms of biological role, pore-forming protein that forms cations-selective hydrophilic pores of around 1 nm and causes cytolysis. Pore formation is a multi-step process that involves specific recognition of membrane sphingomyelin (but neither cholesterol nor phosphatidylcholine) using aromatic rich region and adjacent phosphocholine (POC) binding site, firm binding to the membrane (mainly driven by hydrophobic interactions) accompanied by the transfer of the N-terminal region to the lipid-water interface and finally pore formation after oligomerization of monomers. This Heteractis magnifica (Magnificent sea anemone) protein is Hemolytic toxin.